A 198-amino-acid polypeptide reads, in one-letter code: NAD(P)H dehydrogenase (quinone) (198 aa).

One can recognise a Flavodoxin-like domain in the interval 4 to 189 (ILVLYYSMYG…SIARYQGEYV (186 aa)). Residues 10–15 (SMYGHI) and 78–80 (TRF) each bind FMN. Tyr-12 serves as a coordination point for NAD(+). Trp-98 lines the substrate pocket. FMN-binding positions include 113 to 118 (STGTGG) and His-133.

This sequence belongs to the WrbA family. FMN serves as cofactor.

The enzyme catalyses a quinone + NADH + H(+) = a quinol + NAD(+). It catalyses the reaction a quinone + NADPH + H(+) = a quinol + NADP(+). This Salmonella typhi protein is NAD(P)H dehydrogenase (quinone).